A 195-amino-acid polypeptide reads, in one-letter code: Glycerol-3-phosphate acyltransferase (195 aa).

The next 5 helical transmembrane spans lie at 3 to 23 (FQVV…GFIL), 52 to 72 (LALL…AIAQ), 80 to 100 (ILFL…YLFF), 113 to 133 (LIFI…ICFL), and 147 to 167 (LIAL…IFAI).

This sequence belongs to the PlsY family. Probably interacts with PlsX.

Its subcellular location is the cell inner membrane. The enzyme catalyses an acyl phosphate + sn-glycerol 3-phosphate = a 1-acyl-sn-glycero-3-phosphate + phosphate. Its pathway is lipid metabolism; phospholipid metabolism. Catalyzes the transfer of an acyl group from acyl-phosphate (acyl-PO(4)) to glycerol-3-phosphate (G3P) to form lysophosphatidic acid (LPA). This enzyme utilizes acyl-phosphate as fatty acyl donor, but not acyl-CoA or acyl-ACP. This Ehrlichia ruminantium (strain Gardel) protein is Glycerol-3-phosphate acyltransferase.